A 321-amino-acid polypeptide reads, in one-letter code: Phospho-N-acetylmuramoyl-pentapeptide-transferase (321 aa).

10 helical membrane-spanning segments follow: residues 1 to 21 (MIFV…PVLI), 50 to 70 (MGGL…IIFV), 76 to 96 (IILL…DDYI), 112 to 132 (FLAQ…FHLV), 140 to 160 (IPFT…IVFW), 176 to 196 (GLAT…SFVL), 200 to 220 (AIGI…PYNI), 225 to 245 (VFMG…ISIM), 250 to 270 (LSLI…MLQV), and 300 to 320 (VVTV…WIGV).

This sequence belongs to the glycosyltransferase 4 family. MraY subfamily. Mg(2+) is required as a cofactor.

The protein resides in the cell membrane. The enzyme catalyses UDP-N-acetyl-alpha-D-muramoyl-L-alanyl-gamma-D-glutamyl-L-lysyl-D-alanyl-D-alanine + di-trans,octa-cis-undecaprenyl phosphate = Mur2Ac(oyl-L-Ala-gamma-D-Glu-L-Lys-D-Ala-D-Ala)-di-trans,octa-cis-undecaprenyl diphosphate + UMP. Its pathway is cell wall biogenesis; peptidoglycan biosynthesis. Its function is as follows. Catalyzes the initial step of the lipid cycle reactions in the biosynthesis of the cell wall peptidoglycan: transfers peptidoglycan precursor phospho-MurNAc-pentapeptide from UDP-MurNAc-pentapeptide onto the lipid carrier undecaprenyl phosphate, yielding undecaprenyl-pyrophosphoryl-MurNAc-pentapeptide, known as lipid I. The polypeptide is Phospho-N-acetylmuramoyl-pentapeptide-transferase (Staphylococcus aureus (strain MSSA476)).